We begin with the raw amino-acid sequence, 232 residues long: tRNA (guanine-N(1)-)-methyltransferase (232 aa).

S-adenosyl-L-methionine is bound by residues glycine 111 and 131–136 (IGDYIL).

This sequence belongs to the RNA methyltransferase TrmD family. As to quaternary structure, homodimer.

The protein localises to the cytoplasm. It catalyses the reaction guanosine(37) in tRNA + S-adenosyl-L-methionine = N(1)-methylguanosine(37) in tRNA + S-adenosyl-L-homocysteine + H(+). In terms of biological role, specifically methylates guanosine-37 in various tRNAs. This chain is tRNA (guanine-N(1)-)-methyltransferase, found in Bartonella quintana (strain Toulouse) (Rochalimaea quintana).